The following is an 854-amino-acid chain: MKESEGIDLSTHTPMMQQYFRLKAEHPEILLFYRMGDFYELFFDDAKRASQLLDISLTKRGASAGEPIPMAGVPHHAVENYLARLVQMGESVAICEQIGDPATSKGPVERKVVRIVTPGTISDEALLQEKQDNLLAAIWQDGRGFGYATLDISSGRFRVSEPADRETMAAELQRTNPAELLYPESFESMELIDNRHGLRRRPMWEFEPDTARQQLNLQFGTRDLTGFGVEQAKLALRAAGCLLQYAKDTQRTSLPHIRGITMERQQDGIIMDAATRRNLELTQNLSGGVENTLAAVLDCTVTAMGSRMLKRWIHMPSRDIDALKQRQQAISALQEITPDLQPYLRQVGDLERILARLALRTARPRDLARMRHAFQQFPDIREQLAPLDTDSVRRLVSLIGQFDELRDLLERAVVEAPPVLVRDGGVIAPGYHTELDEWRALADGASDYLDRLEIREREKLGLDTLKVGFNGVHGYYIQVSRGQSHLVPIHYVRRQTLKNAERYIIPELKEYEDKVLTSKGKALALEKALYDELFDLLLPHLAELQQSAAALAELDVLTNLAERADTLNYVCPTLSDKPGIKIAGGRHPVVEQVLREPFISNPLSLSPQRRMLIITGPNMGGKSTYMRQAALIVLMAHIGCFVPADQAVIGPVDRIFTRVGAADDLASGRSTFMVEMTETANILHNATENSLVLMDEIGRGTSTYDGLSLAWACAESLANRIKAMTLFATHYFELTTLPEKMEGVVNVHLDAREHGDTIAFMHSVQDGAASKSYGLAVAALAGVPKEVIKRARQKLKELETLSNNASSSHIDGAQLALLNTDEPSPAIEALEAIDPDALTPRQALDWLYQLKKML.

616 to 623 (GPNMGGKS) serves as a coordination point for ATP.

Belongs to the DNA mismatch repair MutS family.

This protein is involved in the repair of mismatches in DNA. It is possible that it carries out the mismatch recognition step. This protein has a weak ATPase activity. The protein is DNA mismatch repair protein MutS of Pectobacterium atrosepticum (strain SCRI 1043 / ATCC BAA-672) (Erwinia carotovora subsp. atroseptica).